The sequence spans 383 residues: Outer membrane protein S2 (383 aa).

Positions 1–21 are cleaved as a signal peptide; the sequence is MKRKVLALVIPALLAAGAAHA.

It belongs to the Gram-negative porin family. As to quaternary structure, homotrimer.

The protein resides in the cell outer membrane. Forms pores that allow passive diffusion of small molecules across the outer membrane. This is Outer membrane protein S2 (ompS2) from Salmonella typhi.